Reading from the N-terminus, the 338-residue chain is Phosphatidate cytidylyltransferase, mitochondrial (338 aa).

This sequence belongs to the TAM41 family. The cofactor is Mg(2+).

It is found in the mitochondrion inner membrane. The catalysed reaction is a 1,2-diacyl-sn-glycero-3-phosphate + CTP + H(+) = a CDP-1,2-diacyl-sn-glycerol + diphosphate. Its pathway is phospholipid metabolism; CDP-diacylglycerol biosynthesis; CDP-diacylglycerol from sn-glycerol 3-phosphate: step 3/3. In terms of biological role, catalyzes the conversion of phosphatidic acid (PA) to CDP-diacylglycerol (CDP-DAG), an essential intermediate in the synthesis of phosphatidylglycerol, cardiolipin and phosphatidylinositol. This Xenopus laevis (African clawed frog) protein is Phosphatidate cytidylyltransferase, mitochondrial (tamm41).